We begin with the raw amino-acid sequence, 292 residues long: MSAPRLIQRFARPSLSPFFLRTTLARRSFGSSAIRPKDDNGRAPSTAPEHREYQTNRPPNQHVPNTTSTMTRDFPKAGEKSVPPEFVSAADPNYKPADPYPGKVEHFTGGRQETGAQKPELGVGEMEGITFKVEPLKRTGEDVSTIRARLLYQSRKRGILESDLLLSTFADVYLSKMNKEQLQEYDRFLDENDWDIYYWATQDPPTEDNVAEDTPTETWKRTGAKSGEWAQTVGAYKAAYRPVPSRWADSEVLRLLRQHVQDNSATGFHAAKSKKTGGAGLGRMPNVQVFDS.

Disordered regions lie at residues 27–68 and 266–292; these read RSFG…NTTS and TGFH…VFDS. Over residues 55-68 the composition is skewed to polar residues; that stretch reads TNRPPNQHVPNTTS.

It belongs to the SDHAF2 family. In terms of assembly, interacts with the flavoprotein subunit within the SDH catalytic dimer.

Its subcellular location is the mitochondrion matrix. Its function is as follows. Plays an essential role in the assembly of succinate dehydrogenase (SDH), an enzyme complex (also referred to as respiratory complex II) that is a component of both the tricarboxylic acid (TCA) cycle and the mitochondrial electron transport chain, and which couples the oxidation of succinate to fumarate with the reduction of ubiquinone (coenzyme Q) to ubiquinol. Required for flavinylation (covalent attachment of FAD) of the flavoprotein subunit of the SDH catalytic dimer. This chain is Succinate dehydrogenase assembly factor 2, mitochondrial, found in Aspergillus flavus (strain ATCC 200026 / FGSC A1120 / IAM 13836 / NRRL 3357 / JCM 12722 / SRRC 167).